A 546-amino-acid polypeptide reads, in one-letter code: Chaperonin GroEL (546 aa).

ATP is bound by residues 29-32 (TLGP), Lys50, 86-90 (DGTTT), Gly414, 477-479 (NAL), and Asp493. Residues 522–546 (KPEKDAPNPMAGMGGGGMGGMGGMM) form a disordered region. Gly residues predominate over residues 533 to 546 (GMGGGGMGGMGGMM).

The protein belongs to the chaperonin (HSP60) family. As to quaternary structure, forms a cylinder of 14 subunits composed of two heptameric rings stacked back-to-back. Interacts with the co-chaperonin GroES.

Its subcellular location is the cytoplasm. It catalyses the reaction ATP + H2O + a folded polypeptide = ADP + phosphate + an unfolded polypeptide.. Functionally, together with its co-chaperonin GroES, plays an essential role in assisting protein folding. The GroEL-GroES system forms a nano-cage that allows encapsulation of the non-native substrate proteins and provides a physical environment optimized to promote and accelerate protein folding. The sequence is that of Chaperonin GroEL from Leptospira borgpetersenii serovar Hardjo-bovis (strain JB197).